The chain runs to 233 residues: Pirin-like protein YhaK (233 aa).

The protein belongs to the pirin family. Monomer.

The protein localises to the cytoplasm. Its function is as follows. Does not have quercetin 2,3-dioxygenase activity. The sequence is that of Pirin-like protein YhaK (yhaK) from Escherichia coli O157:H7.